The chain runs to 149 residues: Protein FAM72C (149 aa).

It belongs to the FAM72 family.

In Homo sapiens (Human), this protein is Protein FAM72C (FAM72C).